Here is a 553-residue protein sequence, read N- to C-terminus: Membrane protein insertase YidC (553 aa).

A run of 5 helical transmembrane segments spans residues 7 to 24, 365 to 385, 435 to 455, 474 to 494, and 509 to 529; these read VLWVIFFMSAVMLYDNWQ, WGWAIVLLTVLIKAVFFPLSA, LPVVIQIPVFISLYWVLLASV, PFFILPVLMAVSMFVQTSLNP, and PIAFSVMFFFFPAGLVLYYVV.

Belongs to the OXA1/ALB3/YidC family. Type 1 subfamily. In terms of assembly, interacts with the Sec translocase complex via SecD. Specifically interacts with transmembrane segments of nascent integral membrane proteins during membrane integration.

The protein resides in the cell inner membrane. Its function is as follows. Required for the insertion and/or proper folding and/or complex formation of integral membrane proteins into the membrane. Involved in integration of membrane proteins that insert both dependently and independently of the Sec translocase complex, as well as at least some lipoproteins. Aids folding of multispanning membrane proteins. The sequence is that of Membrane protein insertase YidC from Burkholderia orbicola (strain MC0-3).